A 150-amino-acid polypeptide reads, in one-letter code: Transcriptional regulator MraZ (150 aa).

2 consecutive SpoVT-AbrB domains span residues 7 to 58 and 87 to 130; these read KEQH…EPEI and LDSV…SPEK.

This sequence belongs to the MraZ family. As to quaternary structure, forms oligomers.

The protein resides in the cytoplasm. Its subcellular location is the nucleoid. The polypeptide is Transcriptional regulator MraZ (Chlorobium phaeobacteroides (strain BS1)).